A 158-amino-acid polypeptide reads, in one-letter code: Lipoprotein signal peptidase (158 aa).

A run of 3 helical transmembrane segments spans residues 4–24 (KYYI…DQVT), 63–83 (KMGF…LFYI), and 88–108 (YNLF…GNFI). Residues D118 and D136 contribute to the active site. Residues 131 to 151 (IFNVADSSLTIGVLFIIIALL) traverse the membrane as a helical segment.

The protein belongs to the peptidase A8 family.

Its subcellular location is the cell membrane. It catalyses the reaction Release of signal peptides from bacterial membrane prolipoproteins. Hydrolyzes -Xaa-Yaa-Zaa-|-(S,diacylglyceryl)Cys-, in which Xaa is hydrophobic (preferably Leu), and Yaa (Ala or Ser) and Zaa (Gly or Ala) have small, neutral side chains.. It functions in the pathway protein modification; lipoprotein biosynthesis (signal peptide cleavage). In terms of biological role, this protein specifically catalyzes the removal of signal peptides from prolipoproteins. The chain is Lipoprotein signal peptidase from Staphylococcus haemolyticus (strain JCSC1435).